Here is a 122-residue protein sequence, read N- to C-terminus: Cupin 2 conserved barrel domain-containing protein (122 aa).

A cupin 2 conserved barrel region spans residues 55–119; it reads PGGVTTAEDH…DSPVEIVSIW (65 aa). Zn(2+)-binding residues include Asp63, His65, Glu69, and His103.

Requires Zn(2+) as cofactor.

It catalyses the reaction N(6)-hydroxy-L-lysine + L-glutamate + ATP = 1-L-glutamo-2-N(6-)L-lysinohydrazine + AMP + diphosphate + 2 H(+). Its activity is regulated as follows. Inhibited by 1,10-phenanthroline (OP). Functionally, catalyzes hydrazine (N-N) bond formation from an unstable ester intermediate, the product of the ATP-dependent condensation of L-N(6)-OH-lysine and L-glutamine substrates by a methionyl-tRNA synthase-like protein. In Rhodococcus jostii (strain RHA1), this protein is Cupin 2 conserved barrel domain-containing protein.